Here is a 254-residue protein sequence, read N- to C-terminus: Anamorsin homolog (254 aa).

Residues 4–133 (VQENNHVLYL…EVGSKSKLSF (130 aa)) form an N-terminal SAM-like domain region. The linker stretch occupies residues 134–165 (AKKSNVAAVWKLDDNEEEERIDDEELLDEDDK). Positions 176, 185, 188, and 190 each coordinate [2Fe-2S] cluster. The tract at residues 176-190 (CGTTGKRKACKDCSC) is fe-S binding site A. 4 residues coordinate [4Fe-4S] cluster: Cys-215, Cys-218, Cys-226, and Cys-229. 2 short sequence motifs (cx2C motif) span residues 215–218 (CGSC) and 226–229 (CATC). The interval 215–229 (CGSCYLGDAFRCATC) is fe-S binding site B.

The protein belongs to the anamorsin family. Monomer. The cofactor is [2Fe-2S] cluster. It depends on [4Fe-4S] cluster as a cofactor.

It is found in the cytoplasm. The protein localises to the mitochondrion intermembrane space. In terms of biological role, component of the cytosolic iron-sulfur (Fe-S) protein assembly (CIA) machinery. Required for the maturation of extramitochondrial Fe-S proteins. Part of an electron transfer chain functioning in an early step of cytosolic Fe-S biogenesis, facilitating the de novo assembly of a [4Fe-4S] cluster on the cytosolic Fe-S scaffold complex. Electrons are transferred from NADPH via a FAD- and FMN-containing diflavin oxidoreductase. Together with the diflavin oxidoreductase, also required for the assembly of the diferric tyrosyl radical cofactor of ribonucleotide reductase (RNR), probably by providing electrons for reduction during radical cofactor maturation in the catalytic small subunit. The sequence is that of Anamorsin homolog from Anopheles gambiae (African malaria mosquito).